Reading from the N-terminus, the 270-residue chain is uncharacterized protein (270 aa).

This is an uncharacterized protein from Methanocaldococcus jannaschii (strain ATCC 43067 / DSM 2661 / JAL-1 / JCM 10045 / NBRC 100440) (Methanococcus jannaschii).